We begin with the raw amino-acid sequence, 559 residues long: Glutamine--tRNA ligase (559 aa).

A 'HIGH' region motif is present at residues 44-54 (PEPNGYLHIGH). Residues 45–47 (EPN) and 51–57 (HIGHAKS) each bind ATP. D77 and Y222 together coordinate L-glutamine. Residues T241 and 272–273 (RL) each bind ATP. A 'KMSKS' region motif is present at residues 279 to 283 (LTSKR).

It belongs to the class-I aminoacyl-tRNA synthetase family. Monomer.

The protein resides in the cytoplasm. The catalysed reaction is tRNA(Gln) + L-glutamine + ATP = L-glutaminyl-tRNA(Gln) + AMP + diphosphate. This Actinobacillus succinogenes (strain ATCC 55618 / DSM 22257 / CCUG 43843 / 130Z) protein is Glutamine--tRNA ligase.